The chain runs to 333 residues: MSNVVVCALYKFVSLPHFESLREPLLSMMEQAEIKGTLLLASEGINGTVAGNQAAIDALLIWLNQQNGLENITYKLSFDDEMPFYRTKVKLKKEIVTMGVEGIDPLKVVGTYVKPKDWNALISDPEVVLVDTRNDYEVQIGTFKNAINPVTETFREFPEYVKQNLDPAKHKKVAMFCTGGIRCEKSTAYLKEQGFEEVYHLEGGILKYLEEVNKAESLWEGECFVFDNRVAVDHDLKKGQYDQCNACRMPITEAEKLTPDYVQGVSCPHCIDKISEEQRKRFVERERQVNLAKSRNEAHIGSDVNHVIEARRQKKEALRKQSAEKNKAKQANA.

Residues 123 to 217 (SDPEVVLVDT…YLEEVNKAES (95 aa)) form the Rhodanese domain. The active-site Cysteine persulfide intermediate is Cys177. The span at 313-327 (QKKEALRKQSAEKNK) shows a compositional bias: basic and acidic residues. Residues 313 to 333 (QKKEALRKQSAEKNKAKQANA) form a disordered region.

This sequence belongs to the TrhO family.

It catalyses the reaction uridine(34) in tRNA + AH2 + O2 = 5-hydroxyuridine(34) in tRNA + A + H2O. Catalyzes oxygen-dependent 5-hydroxyuridine (ho5U) modification at position 34 in tRNAs. The chain is tRNA uridine(34) hydroxylase from Shewanella oneidensis (strain ATCC 700550 / JCM 31522 / CIP 106686 / LMG 19005 / NCIMB 14063 / MR-1).